The following is a 168-amino-acid chain: Urease accessory protein UreE (168 aa).

Residues 137–168 (PESGAYHGTTGHGGGHSHSHGHSHDHHHDHSH) are disordered. Residues 151-161 (GHSHSHGHSHD) are compositionally biased toward basic residues.

Belongs to the UreE family.

The protein resides in the cytoplasm. In terms of biological role, involved in urease metallocenter assembly. Binds nickel. Probably functions as a nickel donor during metallocenter assembly. The chain is Urease accessory protein UreE from Saccharophagus degradans (strain 2-40 / ATCC 43961 / DSM 17024).